We begin with the raw amino-acid sequence, 147 residues long: Putative 2'-deoxynucleoside 5'-phosphate N-hydrolase 1 (147 aa).

Residues 10–16, tyrosine 25, histidine 42, glutamate 90, and 114–116 contribute to the substrate site; these read YFCGSIR and SAM.

It belongs to the 2'-deoxynucleoside 5'-phosphate N-hydrolase 1 family. As to quaternary structure, monomer and homodimer.

The protein localises to the cytoplasm. Its subcellular location is the nucleus. It catalyses the reaction a pyrimidine 2'-deoxyribonucleoside 5'-phosphate + H2O = a pyrimidine nucleobase + 2-deoxy-D-ribose 5-phosphate. The catalysed reaction is a purine 2'-deoxyribonucleoside 5'-phosphate + H2O = a purine nucleobase + 2-deoxy-D-ribose 5-phosphate. In terms of biological role, catalyzes the cleavage of the N-glycosidic bond of deoxyribonucleoside 5'-monophosphates to yield deoxyribose 5-phosphate and a purine or pyrimidine base. The protein is Putative 2'-deoxynucleoside 5'-phosphate N-hydrolase 1 of Nematostella vectensis (Starlet sea anemone).